Reading from the N-terminus, the 80-residue chain is MENLNMDLLYMAAAVMMGLAAIGAAIGIGILGGKFLEGAARQPDLIPLLRTQFFVVMGLVDAIPMIAVGLGLYVMFAVAK.

2 consecutive transmembrane segments (helical) span residues 11–31 (MAAAVMMGLAAIGAAIGIGIL) and 53–73 (FFVVMGLVDAIPMIAVGLGLY).

Belongs to the ATPase C chain family. As to quaternary structure, F-type ATPases have 2 components, F(1) - the catalytic core - and F(0) - the membrane proton channel. F(1) has five subunits: alpha(3), beta(3), gamma(1), delta(1), epsilon(1). F(0) has three main subunits: a(1), b(2) and c(10-14). The alpha and beta chains form an alternating ring which encloses part of the gamma chain. F(1) is attached to F(0) by a central stalk formed by the gamma and epsilon chains, while a peripheral stalk is formed by the delta and b chains.

It localises to the cell inner membrane. In terms of biological role, f(1)F(0) ATP synthase produces ATP from ADP in the presence of a proton or sodium gradient. F-type ATPases consist of two structural domains, F(1) containing the extramembraneous catalytic core and F(0) containing the membrane proton channel, linked together by a central stalk and a peripheral stalk. During catalysis, ATP synthesis in the catalytic domain of F(1) is coupled via a rotary mechanism of the central stalk subunits to proton translocation. Functionally, key component of the F(0) channel; it plays a direct role in translocation across the membrane. A homomeric c-ring of between 10-14 subunits forms the central stalk rotor element with the F(1) delta and epsilon subunits. The polypeptide is ATP synthase subunit c (Erwinia tasmaniensis (strain DSM 17950 / CFBP 7177 / CIP 109463 / NCPPB 4357 / Et1/99)).